An 837-amino-acid polypeptide reads, in one-letter code: Valine--tRNA ligase (837 aa).

The 'HIGH' region motif lies at 46 to 56; it reads PNLTGTLHIGH. The short motif at 514–518 is the 'KMSKS' region element; the sequence is KMSKS. Lys517 serves as a coordination point for ATP. Positions 767 to 837 form a coiled coil; it reads VDDTTQRLKS…QLIAKLTKAH (71 aa).

This sequence belongs to the class-I aminoacyl-tRNA synthetase family. ValS type 1 subfamily. As to quaternary structure, monomer.

The protein localises to the cytoplasm. The catalysed reaction is tRNA(Val) + L-valine + ATP = L-valyl-tRNA(Val) + AMP + diphosphate. Its function is as follows. Catalyzes the attachment of valine to tRNA(Val). As ValRS can inadvertently accommodate and process structurally similar amino acids such as threonine, to avoid such errors, it has a 'posttransfer' editing activity that hydrolyzes mischarged Thr-tRNA(Val) in a tRNA-dependent manner. The polypeptide is Valine--tRNA ligase (Mycoplasma genitalium (strain ATCC 33530 / DSM 19775 / NCTC 10195 / G37) (Mycoplasmoides genitalium)).